Reading from the N-terminus, the 317-residue chain is Transaldolase (317 aa).

The active-site Schiff-base intermediate with substrate is lysine 126.

This sequence belongs to the transaldolase family. Type 1 subfamily. As to quaternary structure, homodimer.

Its subcellular location is the cytoplasm. The catalysed reaction is D-sedoheptulose 7-phosphate + D-glyceraldehyde 3-phosphate = D-erythrose 4-phosphate + beta-D-fructose 6-phosphate. The protein operates within carbohydrate degradation; pentose phosphate pathway; D-glyceraldehyde 3-phosphate and beta-D-fructose 6-phosphate from D-ribose 5-phosphate and D-xylulose 5-phosphate (non-oxidative stage): step 2/3. In terms of biological role, transaldolase is important for the balance of metabolites in the pentose-phosphate pathway. The protein is Transaldolase of Burkholderia thailandensis (strain ATCC 700388 / DSM 13276 / CCUG 48851 / CIP 106301 / E264).